A 384-amino-acid polypeptide reads, in one-letter code: Probable endopolygalacturonase C (384 aa).

Positions 1–19 (MVRQLALACGLLAAVAVQA) are cleaved as a signal peptide. A propeptide spanning residues 20–40 (APAEPAHPMVTEAPDASLLHK) is cleaved from the precursor. A disulfide bridge links cysteine 45 with cysteine 63. 2 PbH1 repeats span residues 176-207 (ATDLTLTDITIDNTDGDTDDLAANTDGFDIGE) and 208-229 (STDITITGAKVYNQDDCVAINS). Aspartate 222 functions as the Proton donor in the catalytic mechanism. A disulfide bridge links cysteine 224 with cysteine 240. Residue histidine 244 is part of the active site. PbH1 repeat units lie at residues 254–280 (RDDNTVKNVTFYDVNVLKSQQAIRIKA) and 288–310 (ISDITYHEIAFSDATDYGIVIEQ). Asparagine 261 carries an N-linked (GlcNAc...) asparagine glycan. Disulfide bonds link cysteine 349-cysteine 354 and cysteine 373-cysteine 382.

Belongs to the glycosyl hydrolase 28 family.

Its subcellular location is the secreted. The enzyme catalyses (1,4-alpha-D-galacturonosyl)n+m + H2O = (1,4-alpha-D-galacturonosyl)n + (1,4-alpha-D-galacturonosyl)m.. In terms of biological role, involved in maceration and soft-rotting of plant tissue. Hydrolyzes the 1,4-alpha glycosidic bonds of de-esterified pectate in the smooth region of the plant cell wall. The sequence is that of Probable endopolygalacturonase C (pgaC) from Aspergillus aculeatus.